The chain runs to 84 residues: Translational regulator CsrA (84 aa).

The protein belongs to the CsrA/RsmA family. As to quaternary structure, homodimer; the beta-strands of each monomer intercalate to form a hydrophobic core, while the alpha-helices form wings that extend away from the core.

The protein localises to the cytoplasm. Functionally, a translational regulator that binds mRNA to regulate translation initiation and/or mRNA stability. Usually binds in the 5'-UTR at or near the Shine-Dalgarno sequence preventing ribosome-binding, thus repressing translation. Its main target seems to be the major flagellin gene, while its function is anatagonized by FliW. This is Translational regulator CsrA from Leptospira borgpetersenii serovar Hardjo-bovis (strain JB197).